A 285-amino-acid chain; its full sequence is CCR4-NOT transcription complex subunit 7 (285 aa).

A divalent metal cation contacts are provided by Asp40, Glu42, Asp161, Asp230, and Glu278.

It belongs to the CAF1 family. Component of the CCR4-NOT complex. Requires Mn(2+) as cofactor. It depends on Mg(2+) as a cofactor. Co(2+) serves as cofactor.

It localises to the nucleus. Its subcellular location is the cytoplasm. It carries out the reaction Exonucleolytic cleavage of poly(A) to 5'-AMP.. Functionally, has 3'-5' poly(A) exoribonuclease activity for synthetic poly(A) RNA substrate. Catalytic component of the CCR4-NOT complex which is one of the major cellular mRNA deadenylases and is linked to various cellular processes including bulk mRNA degradation, miRNA-mediated repression, translational repression during translational initiation and general transcription regulation. During miRNA-mediated repression the complex also seems to act as translational repressor during translational initiation. Additional complex functions may be a consequence of its influence on mRNA expression. The sequence is that of CCR4-NOT transcription complex subunit 7 (CNOT7) from Gallus gallus (Chicken).